An 843-amino-acid chain; its full sequence is Protein P (843 aa).

The interval 1 to 177 is terminal protein domain (TP); the sequence is MPLSYPHFRK…FCGSQYSWEQ (177 aa). The interval 178–346 is spacer; it reads ELQHGSTSLN…YCLSHIINLL (169 aa). Disordered stretches follow at residues 228–255 and 284–314; these read KQGQ…RWPA and EANP…SVGS. Over residues 239–249 the composition is skewed to basic residues; sequence RSGRLRSRVHT. A polymerase/reverse transcriptase domain (RT) region spans residues 347–690; sequence EDWGPCYEHG…YMNLYPVARQ (344 aa). One can recognise a Reverse transcriptase domain in the interval 357-600; the sequence is EHHIRTPRTP…YNLHFMGYVI (244 aa). D429, D551, and D552 together coordinate Mg(2+).

Belongs to the hepadnaviridae P protein family.

It carries out the reaction DNA(n) + a 2'-deoxyribonucleoside 5'-triphosphate = DNA(n+1) + diphosphate. The enzyme catalyses Endonucleolytic cleavage to 5'-phosphomonoester.. With respect to regulation, activated by host HSP70 and HSP40 in vitro to be able to bind the epsilon loop of the pgRNA. Because deletion of the RNase H region renders the protein partly chaperone-independent, the chaperones may be needed indirectly to relieve occlusion of the RNA-binding site by this domain. Inhibited by several reverse-transcriptase inhibitors: Lamivudine, Adefovir and Entecavir. Multifunctional enzyme that converts the viral RNA genome into dsDNA in viral cytoplasmic capsids. This enzyme displays a DNA polymerase activity that can copy either DNA or RNA templates, and a ribonuclease H (RNase H) activity that cleaves the RNA strand of RNA-DNA heteroduplexes in a partially processive 3'- to 5'-endonucleasic mode. Neo-synthesized pregenomic RNA (pgRNA) are encapsidated together with the P protein, and reverse-transcribed inside the nucleocapsid. Initiation of reverse-transcription occurs first by binding the epsilon loop on the pgRNA genome, and is initiated by protein priming, thereby the 5'-end of (-)DNA is covalently linked to P protein. Partial (+)DNA is synthesized from the (-)DNA template and generates the relaxed circular DNA (RC-DNA) genome. After budding and infection, the RC-DNA migrates in the nucleus, and is converted into a plasmid-like covalently closed circular DNA (cccDNA). The activity of P protein does not seem to be necessary for cccDNA generation, and is presumably released from (+)DNA by host nuclear DNA repair machinery. This Hepatitis B virus genotype F2 subtype adw4q (isolate Senegal/9203) (HBV-F) protein is Protein P.